We begin with the raw amino-acid sequence, 418 residues long: Lactate dehydrogenase (NAD(+),ferredoxin) subunit LctC (418 aa).

FAD-binding positions include arginine 285, 325-328, 343-348, asparagine 362, and 380-381; these read IGLS, SGAVQF, and DL.

The protein belongs to the ETF alpha-subunit/FixB family. In terms of assembly, part of the stable heterotrimeric lactate dehydrogenase-Etf complex, which is formed by the lactate dehydrogenase LctD and the electron-transferring flavoprotein (Etf) alpha (LctC) and beta (LctB) subunits. FAD is required as a cofactor. It depends on [4Fe-4S] cluster as a cofactor.

It localises to the cytoplasm. The catalysed reaction is lactate + 2 reduced [2Fe-2S]-[ferredoxin] + 2 NAD(+) = 2 oxidized [2Fe-2S]-[ferredoxin] + pyruvate + 2 NADH. Its activity is regulated as follows. Activity is stimulated by divalent cations. Highest stimulation is observed with Ca(2+). In terms of biological role, the lactate dehydrogenase-Etf complex catalyzes the oxidation of lactate to pyruvate. It uses flavin-based electron confurcation to drive endergonic lactate oxidation with NAD(+) as oxidant at the expense of simultaneous exergonic electron flow from reduced ferredoxin to NAD(+). The electron transfer flavoprotein (Etf) mediates the electron transfer between the different donors and acceptors. This Acetobacterium woodii (strain ATCC 29683 / DSM 1030 / JCM 2381 / KCTC 1655 / WB1) protein is Lactate dehydrogenase (NAD(+),ferredoxin) subunit LctC.